A 150-amino-acid chain; its full sequence is Small ribosomal subunit protein uS15 (150 aa).

A compositionally biased stretch (basic residues) spans 1 to 10 (MPHRSRHKRG). The disordered stretch occupies residues 1–21 (MPHRSRHKRGSSGSVRPATKT).

Belongs to the universal ribosomal protein uS15 family. Part of the 30S ribosomal subunit.

This is Small ribosomal subunit protein uS15 from Caldivirga maquilingensis (strain ATCC 700844 / DSM 13496 / JCM 10307 / IC-167).